We begin with the raw amino-acid sequence, 299 residues long: Pseudouridine-5'-phosphate glycosidase (299 aa).

Catalysis depends on Glu23, which acts as the Proton donor. Lys84 and Val104 together coordinate substrate. Residue Asp136 coordinates Mn(2+). Ser138–Asp140 serves as a coordination point for substrate. Residue Lys157 is the Nucleophile of the active site.

Belongs to the pseudouridine-5'-phosphate glycosidase family. In terms of assembly, homotrimer. Mn(2+) is required as a cofactor.

It carries out the reaction D-ribose 5-phosphate + uracil = psi-UMP + H2O. Functionally, catalyzes the reversible cleavage of pseudouridine 5'-phosphate (PsiMP) to ribose 5-phosphate and uracil. Functions biologically in the cleavage direction, as part of a pseudouridine degradation pathway. This is Pseudouridine-5'-phosphate glycosidase from Solibacter usitatus (strain Ellin6076).